Here is a 246-residue protein sequence, read N- to C-terminus: UPF0758 protein SSU98_1084 (246 aa).

In terms of domain architecture, MPN spans 103–225 (RILGSEKLGR…YYSFREESDV (123 aa)). Residues H174, H176, and D187 each contribute to the Zn(2+) site. The short motif at 174–187 (HNHPSGSVQPSRND) is the JAMM motif element.

Belongs to the UPF0758 family.

The chain is UPF0758 protein SSU98_1084 from Streptococcus suis (strain 98HAH33).